Here is a 123-residue protein sequence, read N- to C-terminus: UPF0295 protein Bcer98_0460 (123 aa).

The next 2 helical transmembrane spans lie at 12–32 and 43–63; these read IRTFALSLVFIGLLIAYLGVF and FMMLGFLAVLASTFVYFWIGM.

This sequence belongs to the UPF0295 family.

It localises to the cell membrane. The sequence is that of UPF0295 protein Bcer98_0460 from Bacillus cytotoxicus (strain DSM 22905 / CIP 110041 / 391-98 / NVH 391-98).